The primary structure comprises 581 residues: Meiotic PUF family protein 1 (581 aa).

The 356-residue stretch at 225–580 folds into the PUM-HD domain; that stretch reads FPNGTTEPFE…RIAALVEKSK (356 aa). 8 Pumilio repeats span residues 291–326, 327–362, 363–398, 403–438, 439–474, 475–510, 518–554, and 555–581; these read TILP…SFSY, FLKK…NLIE, ELIE…GIFD, KMQG…TCLD, EIIN…RILN, SLLK…RYVK, ELPT…LMAE, and HLKK…KSKS.

Its function is as follows. RNA-binding protein essential for meiotic progression. The sequence is that of Meiotic PUF family protein 1 (mpf1) from Schizosaccharomyces pombe (strain 972 / ATCC 24843) (Fission yeast).